The sequence spans 1086 residues: Calcium-transporting ATPase 9, plasma membrane-type (1086 aa).

Residues methionine 1–serine 15 show a composition bias toward low complexity. A disordered region spans residues methionine 1–threonine 50. Residues methionine 1–asparagine 194 are Cytoplasmic-facing. The segment covering glycine 16 to aspartate 42 has biased composition (basic and acidic residues). Residues serine 57–leucine 68 form an interaction with calmodulin region. The chain crosses the membrane as a helical span at residues phenylalanine 195–alanine 215. Topologically, residues valine 216–leucine 233 are lumenal. Residues aspartate 234 to tyrosine 254 traverse the membrane as a helical segment. At arginine 255 to leucine 382 the chain is on the cytoplasmic side. The chain crosses the membrane as a helical span at residues asparagine 383–valine 402. Topologically, residues alanine 403–isoleucine 439 are lumenal. A helical transmembrane segment spans residues phenylalanine 440–leucine 457. Residues alanine 458–isoleucine 857 are Cytoplasmic-facing. The active-site 4-aspartylphosphate intermediate is aspartate 495. Residues aspartate 802 and aspartate 806 each coordinate Mg(2+). The chain crosses the membrane as a helical span at residues glutamine 858–valine 876. Residues valine 877–leucine 887 lie on the Lumenal side of the membrane. A helical transmembrane segment spans residues lysine 888–alanine 908. Residues threonine 909–leucine 928 are Cytoplasmic-facing. A helical membrane pass occupies residues isoleucine 929–leucine 951. Topologically, residues asparagine 952–histidine 963 are lumenal. A helical transmembrane segment spans residues glutamate 964–asparagine 988. Residues glutamate 989 to lysine 1006 are Cytoplasmic-facing. A helical membrane pass occupies residues asparagine 1007–leucine 1028. Residues glycine 1029–glycine 1038 are Lumenal-facing. A helical membrane pass occupies residues tryptophan 1039 to lysine 1060. Residues leucine 1061–alanine 1086 are Cytoplasmic-facing.

This sequence belongs to the cation transport ATPase (P-type) (TC 3.A.3) family. Type IIB subfamily.

The protein resides in the membrane. The enzyme catalyses Ca(2+)(in) + ATP + H2O = Ca(2+)(out) + ADP + phosphate + H(+). Its activity is regulated as follows. Activated by calmodulin. In terms of biological role, this magnesium-dependent enzyme catalyzes the hydrolysis of ATP coupled with the translocation of calcium from the cytosol out of the cell or into organelles. This chain is Calcium-transporting ATPase 9, plasma membrane-type (ACA9), found in Arabidopsis thaliana (Mouse-ear cress).